Consider the following 417-residue polypeptide: Laccase-like protein claX (417 aa).

This sequence belongs to the multicopper oxidase family.

Laccase-like protein; part of the gene cluster that mediates the biosynthesis of clavilactone A, a meroterpenoid that features a unique benzo-fused ten-membered carbocyclic ring unit with an alpha,beta-epoxy-gamma-lactone moiety, forming an intriguing 10/5/3 tricyclic nested skeleton. ClaR, ClaS and ClaT are sufficient to produce clavilactone A and the function of claX, if any, has still to be identified. The biosynthesis begins with the prenyltransferase claS that transfers geranyl pyrophosphate (GPP) to hydroquinone to produces geranylhydroquinon. The cytochrome P450 monooxygenase claR then catalyzes the diradical coupling reaction between the intramolecular hydroquinone and allyl moieties to form the benzo-fused ten-membered carbocyclic ring unit of wigantol. Finally the cytochrome P450 monooxygenase claT exquisitely and stereoselectively assembles the alpha,beta-epoxy-gamma-lactone moiety, producing clavilactone A via arnebinol A. This is Laccase-like protein claX from Ampulloclitocybe clavipes (Club foot).